The chain runs to 364 residues: MIRAFDALSLPLLRLLDPEDAHRLAIQGLRLLPQAAPPADQPNLSVRAFGLNFSNPVGIAAGFDKNAEAPDALLRMGFGFVEIGTVTPKPQSGNPRPRLFRLERDEAVINRMGFNNDGGEVVLRRLAARSARGGIVGVNVGANKDSEDRVADYVRLIEMFAPVASYFTVNVSSPNTPGLRNLQQAAALDDLLAKVIEARERVRAIAGDTPVLLKIAPDLTLNELDDVVHIARSRKVDGMIVANTTLSRTHTLREQARAKEQGGLSGRPLFRLSTRMVAETYVRAEGAFPLIGVGGIDSGGAALTKIRAGASLIQLYSALIYKGLGLVESIKQDLASTLLRTGRDQLSEIVGADAPMITAEDWPV.

FMN contacts are provided by residues 61–65 (AGFDK) and threonine 85. Lysine 65 serves as a coordination point for substrate. Substrate is bound at residue 110–114 (NRMGF). The FMN site is built by asparagine 139 and asparagine 170. Asparagine 170 serves as a coordination point for substrate. Catalysis depends on serine 173, which acts as the Nucleophile. A substrate-binding site is contributed by asparagine 175. The FMN site is built by lysine 214 and alanine 242. 243 to 244 (NT) is a substrate binding site. FMN is bound by residues glycine 266, glycine 295, and 316-317 (YS).

This sequence belongs to the dihydroorotate dehydrogenase family. Type 2 subfamily. Monomer. FMN is required as a cofactor.

The protein resides in the cell membrane. The catalysed reaction is (S)-dihydroorotate + a quinone = orotate + a quinol. Its pathway is pyrimidine metabolism; UMP biosynthesis via de novo pathway; orotate from (S)-dihydroorotate (quinone route): step 1/1. Its function is as follows. Catalyzes the conversion of dihydroorotate to orotate with quinone as electron acceptor. This is Dihydroorotate dehydrogenase (quinone) from Rhodopseudomonas palustris (strain BisA53).